Reading from the N-terminus, the 78-residue chain is Large ribosomal subunit protein bL28 (78 aa).

It belongs to the bacterial ribosomal protein bL28 family.

This is Large ribosomal subunit protein bL28 from Trichormus variabilis (strain ATCC 29413 / PCC 7937) (Anabaena variabilis).